The chain runs to 577 residues: 2-succinyl-5-enolpyruvyl-6-hydroxy-3-cyclohexene-1-carboxylate synthase (577 aa).

It belongs to the TPP enzyme family. MenD subfamily. Homodimer. Mg(2+) serves as cofactor. The cofactor is Mn(2+). Thiamine diphosphate is required as a cofactor.

It carries out the reaction isochorismate + 2-oxoglutarate + H(+) = 5-enolpyruvoyl-6-hydroxy-2-succinyl-cyclohex-3-ene-1-carboxylate + CO2. It functions in the pathway quinol/quinone metabolism; 1,4-dihydroxy-2-naphthoate biosynthesis; 1,4-dihydroxy-2-naphthoate from chorismate: step 2/7. Its pathway is cofactor biosynthesis; phylloquinone biosynthesis. Catalyzes the thiamine diphosphate-dependent decarboxylation of 2-oxoglutarate and the subsequent addition of the resulting succinic semialdehyde-thiamine pyrophosphate anion to isochorismate to yield 2-succinyl-5-enolpyruvyl-6-hydroxy-3-cyclohexene-1-carboxylate (SEPHCHC). The chain is 2-succinyl-5-enolpyruvyl-6-hydroxy-3-cyclohexene-1-carboxylate synthase from Synechococcus sp. (strain CC9311).